The chain runs to 406 residues: Argininosuccinate synthase (406 aa).

Residues 11 to 19 (AYSGGLDTS) and alanine 38 each bind ATP. L-citrulline is bound by residues tyrosine 91 and serine 96. Glycine 121 contacts ATP. L-aspartate contacts are provided by threonine 123, asparagine 127, and aspartate 128. Asparagine 127 is a binding site for L-citrulline. Residues arginine 131, serine 181, serine 190, glutamate 266, and tyrosine 278 each coordinate L-citrulline.

Belongs to the argininosuccinate synthase family. Type 1 subfamily. Homotetramer.

Its subcellular location is the cytoplasm. The enzyme catalyses L-citrulline + L-aspartate + ATP = 2-(N(omega)-L-arginino)succinate + AMP + diphosphate + H(+). Its pathway is amino-acid biosynthesis; L-arginine biosynthesis; L-arginine from L-ornithine and carbamoyl phosphate: step 2/3. The protein is Argininosuccinate synthase of Campylobacter curvus (strain 525.92).